The chain runs to 152 residues: Cuticle protein 64 (152 aa).

A run of 7 repeats spans residues 27 to 30 (AAPA), 33 to 37 (AAPAV), 39 to 42 (AAPA), 86 to 89 (AAPV), 92 to 95 (AAPA), 98 to 101 (AAPA), and 127 to 130 (AAPA).

Its function is as follows. Component of the cuticle of migratory locust which contains more than 100 different structural proteins. This chain is Cuticle protein 64, found in Locusta migratoria (Migratory locust).